Reading from the N-terminus, the 727-residue chain is Epithelial splicing regulatory protein 2 (727 aa).

The disordered stretch occupies residues 1–22 (MTPPPPPPPPPGPDPAADPAAD). Residue Ser-83 is modified to Phosphoserine. 3 RRM domains span residues 257–353 (TVVR…RFLS), 358–438 (VILR…RSTA), and 475–555 (DCVR…PCST). The residue at position 573 (Ser-573) is a Phosphoserine.

It belongs to the ESRP family. In terms of assembly, interacts with RBPMS. In terms of tissue distribution, epithelial cell-specific.

It localises to the nucleus. Its function is as follows. mRNA splicing factor that regulates the formation of epithelial cell-specific isoforms. Specifically regulates the expression of FGFR2-IIIb, an epithelial cell-specific isoform of FGFR2. Also regulates the splicing of CD44, CTNND1, ENAH, 3 transcripts that undergo changes in splicing during the epithelial-to-mesenchymal transition (EMT). Acts by directly binding specific sequences in mRNAs. Binds the GU-rich sequence motifs in the ISE/ISS-3, a cis-element regulatory region present in the mRNA of FGFR2. This chain is Epithelial splicing regulatory protein 2 (ESRP2), found in Homo sapiens (Human).